A 251-amino-acid polypeptide reads, in one-letter code: Proteasome subunit alpha type-7 (251 aa).

It belongs to the peptidase T1A family. The 26S proteasome consists of a 20S proteasome core and two 19S regulatory subunits. The 20S proteasome core is composed of 28 subunits that are arranged in four stacked rings, resulting in a barrel-shaped structure. The two end rings are each formed by seven alpha subunits, and the two central rings are each formed by seven beta subunits. The catalytic chamber with the active sites is on the inside of the barrel.

The protein resides in the cytoplasm. It is found in the nucleus. In terms of biological role, the proteasome is a multicatalytic proteinase complex which is characterized by its ability to cleave peptides with Arg, Phe, Tyr, Leu, and Glu adjacent to the leaving group at neutral or slightly basic pH. The proteasome has an ATP-dependent proteolytic activity. This is Proteasome subunit alpha type-7 (psma7) from Carassius auratus (Goldfish).